Reading from the N-terminus, the 175-residue chain is Chorismate pyruvate-lyase (175 aa).

4 residues coordinate substrate: Met36, Arg78, Leu116, and Glu157.

It belongs to the UbiC family. Monomer.

It localises to the cytoplasm. It catalyses the reaction chorismate = 4-hydroxybenzoate + pyruvate. It functions in the pathway cofactor biosynthesis; ubiquinone biosynthesis. In terms of biological role, removes the pyruvyl group from chorismate, with concomitant aromatization of the ring, to provide 4-hydroxybenzoate (4HB) for the ubiquinone pathway. In Hamiltonella defensa subsp. Acyrthosiphon pisum (strain 5AT), this protein is Chorismate pyruvate-lyase.